A 777-amino-acid chain; its full sequence is Degenerin unc-8 (777 aa).

At 1 to 128 the chain is on the cytoplasmic side; the sequence is MSPLLTWNLI…VATSSFFGRY (128 aa). A helical transmembrane segment spans residues 129–149; the sequence is VWAALFMCMLMAFLLQTYWTM. Over 150-689 the chain is Extracellular; the sequence is SEYLQYRTII…KETAGYTLVN (540 aa). 7 N-linked (GlcNAc...) asparagine glycosylation sites follow: Asn274, Asn319, Asn357, Asn411, Asn453, Asn533, and Asn597. Residues 690 to 710 form a helical membrane-spanning segment; sequence LFSDFGGNIGLWIGFSVITFA. Over 711–777 the chain is Cytoplasmic; it reads EFAELFCEIC…NESTKELMSK (67 aa). The tract at residues 752 to 777 is disordered; the sequence is QRSPKKSQPGEDEVSTNESTKELMSK.

It belongs to the amiloride-sensitive sodium channel (TC 1.A.6) family.

Its subcellular location is the membrane. Sodium permeable non-voltage-sensitive ion channel. Involved in the activity-dependent removal of selected presynaptic proteins, such as synaptobrevin snb-1, and Ras-related rab-3, in the remodeling of GABAergic motor neurons. The chain is Degenerin unc-8 from Caenorhabditis elegans.